The primary structure comprises 209 residues: Probable GTP-binding protein EngB (209 aa).

Residues 22–198 (TPLEIAFVGR…NRTVGSWLDA (177 aa)) enclose the EngB-type G domain. Mg(2+) contacts are provided by S37 and T59.

Belongs to the TRAFAC class TrmE-Era-EngA-EngB-Septin-like GTPase superfamily. EngB GTPase family. It depends on Mg(2+) as a cofactor.

In terms of biological role, necessary for normal cell division and for the maintenance of normal septation. The sequence is that of Probable GTP-binding protein EngB from Neisseria meningitidis serogroup B (strain ATCC BAA-335 / MC58).